The following is a 100-amino-acid chain: Urease subunit gamma (100 aa).

Belongs to the urease gamma subunit family. Heterotrimer of UreA (gamma), UreB (beta) and UreC (alpha) subunits. Three heterotrimers associate to form the active enzyme.

Its subcellular location is the cytoplasm. The catalysed reaction is urea + 2 H2O + H(+) = hydrogencarbonate + 2 NH4(+). It functions in the pathway nitrogen metabolism; urea degradation; CO(2) and NH(3) from urea (urease route): step 1/1. This chain is Urease subunit gamma, found in Corynebacterium glutamicum (strain R).